Here is a 161-residue protein sequence, read N- to C-terminus: uncharacterized protein (161 aa).

The protein belongs to the sapovirus VP3 family.

This is an uncharacterized protein from Sapporo virus (strain Human/United Kingdom/Manchester/1993) (Hu/SV/Man/1993/UK).